Here is an 853-residue protein sequence, read N- to C-terminus: WEB family protein At5g16730, chloroplastic (853 aa).

Composition is skewed to low complexity over residues 1–27 and 36–49; these read MASK…PATP and KSET…STTT. A chloroplast-targeting transit peptide spans 1-84; it reads MASKTKTSLS…PTPPEKSQAR (84 aa). Disordered stretches follow at residues 1-106, 386-465, 666-765, and 778-820; these read MASK…IKED, KEDL…SKKA, LAKK…SVEV, and KEAF…ALTA. Residues 92-101 are compositionally biased toward polar residues; that stretch reads ESPQTTTRLS. Residues 94–670 are a coiled coil; it reads PQTTTRLSQI…LEEAILAKKQ (577 aa). Composition is skewed to basic and acidic residues over residues 402–465, 698–718, and 732–753; these read EVSK…SKKA, NGHR…HEPP, and MEEK…KKDE. The span at 754-763 shows a compositional bias: acidic residues; the sequence is SQDDDKDDSV. A compositionally biased stretch (basic and acidic residues) spans 778–788; that stretch reads KEAFPDKKSEL. Ser790 bears the Phosphoserine mark. The segment covering 797 to 807 has biased composition (basic and acidic residues); that stretch reads SSKIDESDKTS.

It belongs to the WEB family.

It is found in the plastid. The protein localises to the chloroplast. The polypeptide is WEB family protein At5g16730, chloroplastic (Arabidopsis thaliana (Mouse-ear cress)).